The primary structure comprises 112 residues: UPF0342 protein SPT_0901 (112 aa).

This sequence belongs to the UPF0342 family.

This chain is UPF0342 protein SPT_0901, found in Streptococcus pneumoniae (strain Taiwan19F-14).